A 438-amino-acid chain; its full sequence is Aspartate--tRNA(Asp/Asn) ligase (438 aa).

Glutamate 176 contributes to the L-aspartate binding site. Positions 198-201 (QLYK) are aspartate. An L-aspartate-binding site is contributed by arginine 220. ATP contacts are provided by residues 220 to 222 (RAE), 228 to 230 (RHL), and glutamate 361. The Mg(2+) site is built by glutamate 361 and serine 364. L-aspartate is bound by residues serine 364 and arginine 368. Position 409-412 (409-412 (GADR)) interacts with ATP.

Belongs to the class-II aminoacyl-tRNA synthetase family. Type 2 subfamily. As to quaternary structure, homodimer. The cofactor is Mg(2+).

It localises to the cytoplasm. The catalysed reaction is tRNA(Asx) + L-aspartate + ATP = L-aspartyl-tRNA(Asx) + AMP + diphosphate. In terms of biological role, aspartyl-tRNA synthetase with relaxed tRNA specificity since it is able to aspartylate not only its cognate tRNA(Asp) but also tRNA(Asn). Reaction proceeds in two steps: L-aspartate is first activated by ATP to form Asp-AMP and then transferred to the acceptor end of tRNA(Asp/Asn). In Methanococcus maripaludis (strain C5 / ATCC BAA-1333), this protein is Aspartate--tRNA(Asp/Asn) ligase.